The primary structure comprises 500 residues: NAD(P)H-quinone oxidoreductase chain 4, chloroplastic (500 aa).

14 consecutive transmembrane segments (helical) span residues 4–24 (FPWL…IFFL), 37–57 (ICIC…HFQL), 84–104 (GLSI…TLAA), 111–129 (SRLF…IGSF), 134–154 (LLLF…LLSM), 167–187 (FILY…GMGL), 208–228 (ALEI…SPII), 242–262 (HYST…YGLV), 272–292 (AHSI…IYAA), 305–325 (IAYS…SITD), 330–350 (GAIL…FLAG), 374–396 (IFTM…GFVA), 411–431 (FFMP…LTPI), and 462–482 (LFVS…PDFV).

Belongs to the complex I subunit 4 family.

It is found in the plastid. The protein resides in the chloroplast thylakoid membrane. It carries out the reaction a plastoquinone + NADH + (n+1) H(+)(in) = a plastoquinol + NAD(+) + n H(+)(out). It catalyses the reaction a plastoquinone + NADPH + (n+1) H(+)(in) = a plastoquinol + NADP(+) + n H(+)(out). In Chloranthus spicatus (Chulantree), this protein is NAD(P)H-quinone oxidoreductase chain 4, chloroplastic.